Here is a 619-residue protein sequence, read N- to C-terminus: Laccase (619 aa).

The first 21 residues, 1 to 21, serve as a signal peptide directing secretion; the sequence is MKFLGIAALVAGLLAPSLVLG. Residues 22–49 constitute a propeptide that is removed on maturation; sequence APAPGTEGVNLLTPVDKRQDSQAERYGG. A disulfide bridge connects residues Cys-55 and Cys-63. Plastocyanin-like domains lie at 84–207 and 216–373; these read TRRY…IVIN and VDLG…LPTN. Asn-139 carries an N-linked (GlcNAc...) asparagine glycan. Positions 144, 146, 189, and 191 each coordinate Cu cation. Disulfide bonds link Cys-165-Cys-586 and Cys-349-Cys-383. N-linked (GlcNAc...) asparagine glycans are attached at residues Asn-282, Asn-295, and Asn-340. N-linked (GlcNAc...) asparagine glycans are attached at residues Asn-422 and Asn-444. The Plastocyanin-like 3 domain occupies 431–566; it reads NKPVLEYVLT…GGLSNQFLER (136 aa). Residues His-477, His-480, His-482, His-548, Cys-549, His-550, and His-554 each contribute to the Cu cation site. Positions 607-619 are excised as a propeptide; that stretch reads RSGVKAREVKMKW.

Belongs to the multicopper oxidase family. Cu cation serves as cofactor.

The protein localises to the secreted. The enzyme catalyses 4 hydroquinone + O2 = 4 benzosemiquinone + 2 H2O. Lignin degradation and detoxification of lignin-derived products. This Neurospora crassa (strain ATCC 24698 / 74-OR23-1A / CBS 708.71 / DSM 1257 / FGSC 987) protein is Laccase (lacc).